The following is a 131-amino-acid chain: UPF0344 protein Sca_0577 (131 aa).

The next 4 membrane-spanning stretches (helical) occupy residues 1–21 (MLHL…VSYI), 42–62 (LFLV…FATA), 69–89 (LLTL…VTLV), and 99–119 (GLFW…IILP).

The protein belongs to the UPF0344 family.

It is found in the cell membrane. In Staphylococcus carnosus (strain TM300), this protein is UPF0344 protein Sca_0577.